Consider the following 297-residue polypeptide: Thiosulfate sulfurtransferase (297 aa).

At lysine 14 the chain carries N6-acetyllysine; alternate. Lysine 14 carries the post-translational modification N6-succinyllysine; alternate. In terms of domain architecture, Rhodanese 1 spans 25–143 (VGPGLRVLDA…WLKEGHPVTS (119 aa)). Serine 35 carries an O-linked (GlcNAc) serine glycan. Position 38 is a phosphoserine (serine 38). Lysine 136 is subject to N6-acetyllysine; alternate. Lysine 136 is subject to N6-succinyllysine; alternate. A hinge region spans residues 144-159 (EPSRPEPAIFKATLNR). At lysine 163 the chain carries N6-acetyllysine. The Rhodanese 2 domain maps to 173–288 (ESKRFQLVDS…WFHRAPPETW (116 aa)). Lysine 175 bears the N6-acetyllysine; alternate mark. Lysine 175 bears the N6-succinyllysine; alternate mark. Arginine 187 is a substrate binding site. Lysine 224 is subject to N6-acetyllysine; alternate. Lysine 224 bears the N6-succinyllysine; alternate mark. The residue at position 236 (lysine 236) is an N6-acetyllysine. Lysine 237 is modified (N6-acetyllysine; alternate). An N6-succinyllysine; alternate modification is found at lysine 237. The active-site Cysteine persulfide intermediate is cysteine 248. Lysine 250 provides a ligand contact to substrate.

Monomer. In terms of tissue distribution, expressed in numerous tissues.

Its subcellular location is the mitochondrion matrix. The enzyme catalyses thiosulfate + hydrogen cyanide = thiocyanate + sulfite + 2 H(+). In terms of biological role, together with MRPL18, acts as a mitochondrial import factor for the cytosolic 5S rRNA. Only the nascent unfolded cytoplasmic form is able to bind to the 5S rRNA. Formation of iron-sulfur complexes and cyanide detoxification. Binds molecular oxygen and sulfur. This is Thiosulfate sulfurtransferase (TST) from Bos taurus (Bovine).